The chain runs to 169 residues: uncharacterized protein (169 aa).

Helical transmembrane passes span 62 to 84 (RWGFFAGGLIFLVSSAIMYLLGL) and 94 to 116 (ALMLFVLPTAFLFVSLLLLYWWF).

It is found in the cell membrane. This is an uncharacterized protein from Archaeoglobus fulgidus (strain ATCC 49558 / DSM 4304 / JCM 9628 / NBRC 100126 / VC-16).